Consider the following 185-residue polypeptide: Probable nicotinate-nucleotide adenylyltransferase (185 aa).

It belongs to the NadD family.

The enzyme catalyses nicotinate beta-D-ribonucleotide + ATP + H(+) = deamido-NAD(+) + diphosphate. It functions in the pathway cofactor biosynthesis; NAD(+) biosynthesis; deamido-NAD(+) from nicotinate D-ribonucleotide: step 1/1. Functionally, catalyzes the reversible adenylation of nicotinate mononucleotide (NaMN) to nicotinic acid adenine dinucleotide (NaAD). This is Probable nicotinate-nucleotide adenylyltransferase from Methylorubrum extorquens (strain PA1) (Methylobacterium extorquens).